A 247-amino-acid polypeptide reads, in one-letter code: MIKLVLLRHGESQWNRENRFTGWYDIGLSEKGETESRAAGELLKKEGFTFDVAFTSVLKRAIGTLWNVLEGMDLMWIPVFKNWRLNERHYGALQGMNKAETAQQHGDEQVLVWRRSYDTPPPPLEKNDPRFPGNDPRYATLAPEEVPVTECLKDTVDRFLPLWNDEIAPMIRSGKRVIIAAHGNSLRALVKYLDNISEEDIVGLNIPTGVPLVYELDDDLKPLKSYYLGDQEELQKAIDSVANQGKA.

Substrate is bound by residues 8-15 (RHGESQWN), 21-22 (TG), Arg60, 87-90 (ERHY), Lys98, 114-115 (RR), and 183-184 (GN). The active-site Tele-phosphohistidine intermediate is His9. Glu87 functions as the Proton donor/acceptor in the catalytic mechanism.

Belongs to the phosphoglycerate mutase family. BPG-dependent PGAM subfamily.

The catalysed reaction is (2R)-2-phosphoglycerate = (2R)-3-phosphoglycerate. It participates in carbohydrate degradation; glycolysis; pyruvate from D-glyceraldehyde 3-phosphate: step 3/5. Its function is as follows. Catalyzes the interconversion of 2-phosphoglycerate and 3-phosphoglycerate. The sequence is that of 2,3-bisphosphoglycerate-dependent phosphoglycerate mutase from Chlorobium phaeobacteroides (strain BS1).